Reading from the N-terminus, the 185-residue chain is RRM domain-containing protein ECU09_1470 (185 aa).

RRM domains lie at 8 to 87 (NQLA…YAKR) and 101 to 170 (KKVY…PAYE).

In Encephalitozoon cuniculi (strain GB-M1) (Microsporidian parasite), this protein is RRM domain-containing protein ECU09_1470.